We begin with the raw amino-acid sequence, 426 residues long: Glutamate-1-semialdehyde 2,1-aminomutase (426 aa).

Lys265 carries the N6-(pyridoxal phosphate)lysine modification.

This sequence belongs to the class-III pyridoxal-phosphate-dependent aminotransferase family. HemL subfamily. Homodimer. Pyridoxal 5'-phosphate is required as a cofactor.

It is found in the cytoplasm. The enzyme catalyses (S)-4-amino-5-oxopentanoate = 5-aminolevulinate. It functions in the pathway porphyrin-containing compound metabolism; protoporphyrin-IX biosynthesis; 5-aminolevulinate from L-glutamyl-tRNA(Glu): step 2/2. This chain is Glutamate-1-semialdehyde 2,1-aminomutase, found in Yersinia enterocolitica serotype O:8 / biotype 1B (strain NCTC 13174 / 8081).